A 44-amino-acid chain; its full sequence is DNA-directed RNA polymerase subunit Rpo12 (44 aa).

Zn(2+)-binding residues include C8, C22, and C25.

Belongs to the archaeal Rpo12/eukaryotic RPC10 RNA polymerase subunit family. As to quaternary structure, part of the RNA polymerase complex. Requires Zn(2+) as cofactor.

The protein localises to the cytoplasm. It catalyses the reaction RNA(n) + a ribonucleoside 5'-triphosphate = RNA(n+1) + diphosphate. Its function is as follows. DNA-dependent RNA polymerase (RNAP) catalyzes the transcription of DNA into RNA using the four ribonucleoside triphosphates as substrates. The protein is DNA-directed RNA polymerase subunit Rpo12 of Natronomonas pharaonis (strain ATCC 35678 / DSM 2160 / CIP 103997 / JCM 8858 / NBRC 14720 / NCIMB 2260 / Gabara) (Halobacterium pharaonis).